Reading from the N-terminus, the 245-residue chain is tRNA pseudouridine synthase A (245 aa).

D52 serves as the catalytic Nucleophile. Y112 contacts substrate.

This sequence belongs to the tRNA pseudouridine synthase TruA family. Homodimer.

The enzyme catalyses uridine(38/39/40) in tRNA = pseudouridine(38/39/40) in tRNA. Functionally, formation of pseudouridine at positions 38, 39 and 40 in the anticodon stem and loop of transfer RNAs. The polypeptide is tRNA pseudouridine synthase A (Dictyoglomus turgidum (strain DSM 6724 / Z-1310)).